The sequence spans 429 residues: Forkhead box protein P3 (429 aa).

Positions 1-67 (MPNPRPAKPM…SSLNPLPPSQ (67 aa)) are disordered. The residue at position 19 (S19) is a Phosphoserine; by CDK2. K31 is modified (N6-acetyllysine). The span at 56–67 (TSSSLNPLPPSQ) shows a compositional bias: low complexity. The Nuclear export signal signature appears at 67-75 (QLQLPTVPL). Residues 91 to 95 (LQALL) carry the LXXLL motif motif. An essential for transcriptional repressor activity and for interaction with KAT5 and HDAC7 region spans residues 105-189 (LSTVDAHAQT…SNLLAAPQGS (85 aa)). The segment at 148–198 (LPPGINVASLEWVSREPALLCTFPRSGTPRKDSNLLAAPQGSYPLLANGVC) is interaction with IKZF4. T175 carries the post-translational modification Phosphothreonine; by CDK2. The C2H2-type zinc finger occupies 196–221 (GVCKWPGCEKVFEEPEEFLKHCQADH). Residues 238–247 (VQSLEQQLEL) carry the Nuclear export signal motif. A leucine-zipper region spans residues 238–259 (VQSLEQQLELEKEKLGAMQAHL). Residues K249 and K251 each participate in a glycyl lysine isopeptide (Lys-Gly) (interchain with G-Cter in ubiquitin) cross-link. N6-acetyllysine; alternate is present on residues K262 and K267. Glycyl lysine isopeptide (Lys-Gly) (interchain with G-Cter in ubiquitin); alternate cross-links involve residues K262 and K267. Positions 277-336 (SSCCIVATSTQGSVLPAWSAPREAPDGGLFAVRRHLWGSHGNSSFPEFFHNMDYFKYHNM) are interaction with RUNX1. The segment at residues 337 to 423 (RPPFTYATLI…RKKRSQRPNK (87 aa)) is a DNA-binding region (fork-head). Residue K393 forms a Glycyl lysine isopeptide (Lys-Gly) (interchain with G-Cter in ubiquitin) linkage. A Nuclear localization signal motif is present at residues 414-417 (RKKR). S418 is subject to Phosphoserine. The propeptide occupies 418–429 (SQRPNKCSNPCP).

Homodimer. Dimerization is essential for its transcriptional regulator activity. Interacts with IKZF3. Interacts (via LXXLL motif) with isoform 4 of RORA (via AF-2 motif). Interacts with STUB1 and HSPA1A/B. Interacts with IKZF4, HDAC7 and KAT5. Interacts with RUNX1, RUNX2, RUNX3 and NFATC2. Interacts with RORC. Interacts with HDAC9 in the absence of T-cell stimulation. Interacts with RELA, PPP1CA, PPP1CB, PPP1CG, HSPA8 and USP7. Acetylation on lysine residues stabilizes FOXP3 and promotes differentiation of T-cells into induced regulatory T-cells (iTregs) associated with suppressive functions. Acetylation is mediated by a coordinated action of KAT5 and EP300/p300 acetyltransferases: EP300/p300 is required to enhance KAT5 autoacetylation, promoting acetylation of FOXP3 by KAT5. Deacetylated by SIRT1. In terms of processing, polyubiquitinated, leading to its proteasomal degradation in regulatory T-cells (Treg) which is mediated by STUB1 in a HSPA1A/B-dependent manner. Deubiquitinated by USP7 and USP44 leading to increase in protein stability. Post-translationally, phosphorylation at Ser-418 regulates its transcriptional repressor activity and consequently, regulatory T-cells (Treg) suppressive function. Phosphorylation by CDK2 negatively regulates its transcriptional activity and protein stability. Undergoes proteolytic cleavage in activated regulatory T-cells (Treg), and can be cleaved at either the N- or C-terminal site, or at both sites. Treg expressing the form cleaved at C-terminal site or both N- and C-terminal sites exhibit an increased induction of IL10 and an increased capacity to suppress proliferation of conventional T-cells in vitro. Treg expressing the form cleaved at only the C-terminal site are highly effective at preventing experimental colitis in an in vivo model of inflammatory bowel disease. High level of expression in thymus and spleen.

It localises to the nucleus. It is found in the cytoplasm. In terms of biological role, transcriptional regulator which is crucial for the development and inhibitory function of regulatory T-cells (Treg). Plays an essential role in maintaining homeostasis of the immune system by allowing the acquisition of full suppressive function and stability of the Treg lineage, and by directly modulating the expansion and function of conventional T-cells. Can act either as a transcriptional repressor or a transcriptional activator depending on its interactions with other transcription factors, histone acetylases and deacetylases. The suppressive activity of Treg involves the coordinate activation of many genes, including CTLA4 and TNFRSF18 by FOXP3 along with repression of genes encoding cytokines such as interleukin-2 (IL2) and interferon-gamma (IFNG). Inhibits cytokine production and T-cell effector function by repressing the activity of two key transcription factors, RELA and NFATC2. Mediates transcriptional repression of IL2 via its association with histone acetylase KAT5 and histone deacetylase HDAC7. Can activate the expression of TNFRSF18, IL2RA and CTLA4 and repress the expression of IL2 and IFNG via its association with transcription factor RUNX1. Inhibits the differentiation of IL17 producing helper T-cells (Th17) by antagonizing RORC function, leading to down-regulation of IL17 expression, favoring Treg development. Inhibits the transcriptional activator activity of RORA. Can repress the expression of IL2 and IFNG via its association with transcription factor IKZF4. The polypeptide is Forkhead box protein P3 (Foxp3) (Mus musculus (Mouse)).